The chain runs to 252 residues: MPEENRGGHQPYTEESSVSALHPVRTDDSVGSSAEQTGDAPTLTERQRSVLNVIHRYVRERGYPPSIREIGEAVGLSSPSSVAHQLKVLQRKGYLHRDQNRPRAVEIRIPHKTSGRTRRELGGLSGSEEIVDIPLLGRIAAGGPILAEEHVEDVLSLPRQLVGEGTLFMLTVVGDSMIDAAIADGDLVVVRQQPDANNGDIVAALLGDEATVKVFKRDREHVWLLPRNSAYDPINGDSATILGKVVTVLRKV.

The interval 1-46 (MPEENRGGHQPYTEESSVSALHPVRTDDSVGSSAEQTGDAPTLTER) is disordered. Positions 67–87 (IREIGEAVGLSSPSSVAHQLK) form a DNA-binding region, H-T-H motif. Catalysis depends on for autocatalytic cleavage activity residues Ser-176 and Lys-213.

Belongs to the peptidase S24 family. Homodimer.

The catalysed reaction is Hydrolysis of Ala-|-Gly bond in repressor LexA.. In terms of biological role, represses a number of genes involved in the response to DNA damage (SOS response), including recA and lexA. In the presence of single-stranded DNA, RecA interacts with LexA causing an autocatalytic cleavage which disrupts the DNA-binding part of LexA, leading to derepression of the SOS regulon and eventually DNA repair. This chain is LexA repressor, found in Thermobifida fusca (strain YX).